The sequence spans 406 residues: Putative colanic acid biosynthesis glycosyltransferase WcaL (406 aa).

It belongs to the glycosyltransferase group 1 family. Glycosyltransferase 4 subfamily.

The protein operates within slime biogenesis; slime polysaccharide biosynthesis. In Escherichia coli (strain K12), this protein is Putative colanic acid biosynthesis glycosyltransferase WcaL (wcaL).